Consider the following 513-residue polypeptide: Microcin J25-processing protein McjC (513 aa).

An Asparagine synthetase domain is found at 176–436 (STIDSIIDNI…FGSDIFWKKT (261 aa)).

Its subcellular location is the cytoplasm. Functionally, along with McjB, necessary and sufficient to process the inactive microcin J25 (McjA) precursor into the active peptide. May be involved in the formation of the amide bond between Gly-38 and Glu-53 of McjA. The sequence is that of Microcin J25-processing protein McjC (mcjC) from Escherichia coli.